The following is a 239-amino-acid chain: Fatty acid metabolism regulator protein (239 aa).

The region spanning K6 to F74 is the HTH gntR-type domain. Positions E34–Q53 form a DNA-binding region, H-T-H motif.

Homodimer.

It localises to the cytoplasm. In terms of biological role, multifunctional regulator of fatty acid metabolism. This is Fatty acid metabolism regulator protein from Shewanella denitrificans (strain OS217 / ATCC BAA-1090 / DSM 15013).